Here is a 361-residue protein sequence, read N- to C-terminus: Feruloyl CoA ortho-hydroxylase 2 (361 aa).

The 102-residue stretch at 211 to 312 (GSTRINLNYY…RISVPIFVSP (102 aa)) folds into the Fe2OG dioxygenase domain. Residue Tyr-220 coordinates 2-oxoglutarate. Fe cation is bound by residues His-235, Asp-237, and His-293. The 2-oxoglutarate site is built by Arg-303 and Ser-305.

It belongs to the iron/ascorbate-dependent oxidoreductase family. L-ascorbate serves as cofactor. The cofactor is Fe(2+). In terms of tissue distribution, low expression in roots.

The enzyme catalyses (E)-feruloyl-CoA + 2-oxoglutarate + O2 = (E)-6-hydroxyferuloyl-CoA + succinate + CO2. It carries out the reaction (E)-6-hydroxyferuloyl-CoA = scopoletin + CoA. Its function is as follows. 2-oxoglutarate (OG)- and Fe(II)-dependent dioxygenase (2OGD)involved in scopoletin biosynthesis. Converts feruloyl CoA into 6'-hydroxyferuloyl CoA but has no activity with ferulic acid, feruloylquinic acid, caffeic acid, caffeoyl CoA, p-coumaric acid, cinnamic acid, cinnamoyl CoA or benzoyl CoA. The polypeptide is Feruloyl CoA ortho-hydroxylase 2 (Arabidopsis thaliana (Mouse-ear cress)).